The chain runs to 198 residues: Glycerol-3-phosphate acyltransferase (198 aa).

5 helical membrane passes run 2–22 (IIVI…TGYL), 55–75 (MITQ…CMLI), 88–108 (YLSI…FLGF), 118–138 (VGAF…VYFV), and 162–182 (IALR…GLLI).

Belongs to the PlsY family. As to quaternary structure, probably interacts with PlsX.

It localises to the cell membrane. The enzyme catalyses an acyl phosphate + sn-glycerol 3-phosphate = a 1-acyl-sn-glycero-3-phosphate + phosphate. It participates in lipid metabolism; phospholipid metabolism. Its function is as follows. Catalyzes the transfer of an acyl group from acyl-phosphate (acyl-PO(4)) to glycerol-3-phosphate (G3P) to form lysophosphatidic acid (LPA). This enzyme utilizes acyl-phosphate as fatty acyl donor, but not acyl-CoA or acyl-ACP. This is Glycerol-3-phosphate acyltransferase from Clostridium acetobutylicum (strain ATCC 824 / DSM 792 / JCM 1419 / IAM 19013 / LMG 5710 / NBRC 13948 / NRRL B-527 / VKM B-1787 / 2291 / W).